Consider the following 349-residue polypeptide: tRNA pseudouridine synthase D (349 aa).

Substrate is bound at residue Phe27. The active-site Nucleophile is the Asp80. Asn129 lines the substrate pocket. The 149-residue stretch at 155-303 (GVPNYFGAQR…VEAARRAMLL (149 aa)) folds into the TRUD domain. Phe329 contacts substrate.

This sequence belongs to the pseudouridine synthase TruD family.

It carries out the reaction uridine(13) in tRNA = pseudouridine(13) in tRNA. In terms of biological role, responsible for synthesis of pseudouridine from uracil-13 in transfer RNAs. The protein is tRNA pseudouridine synthase D of Escherichia coli O45:K1 (strain S88 / ExPEC).